The primary structure comprises 256 residues: Small ribosomal subunit protein eS1B (256 aa).

The residue at position 2 (alanine 2) is an N-acetylalanine; partial.

This sequence belongs to the eukaryotic ribosomal protein eS1 family. In terms of assembly, component of the small ribosomal subunit. Mature ribosomes consist of a small (40S) and a large (60S) subunit. The 40S subunit contains about 33 different proteins and 1 molecule of RNA (18S). The 60S subunit contains about 49 different proteins and 3 molecules of RNA (25S, 5.8S and 5S).

It localises to the cytoplasm. This Clavispora lusitaniae (strain ATCC 42720) (Yeast) protein is Small ribosomal subunit protein eS1B.